The primary structure comprises 453 residues: MKYNGDKVEGIKIAYIGGGSRGWAWRLMSDLALEQSLSGTVYLYDIDYEAAKTNEIIGNNLKSQWEYKSVDSMEEALKGADFVIISILPGTFNEMMSDVHTPEKFGIYQSVGDTTGPGGLFRALRTIPLYVEFANKIKKYCPEAWVINYTNPMALCVKTLYETFPKIKAFGCCHEVFSTQNLIAKAAKEIEGIECSREDIRTNVLGINHFTWIDKATYKNIDLIPVYKKFVEKYFESGYEDRGDWKESYFNSANKVKFDLFNKYGIIAAAGDRHLAEFIPFFGYLENPEAVAKWKFHLTPVSWRIKNREELIKKSKKMAKGEEKFEIEPSGEEGVKQMKALLGLGDLITNVNLPNRGQMEGVEFNTVVETNAFFTKDRVQPIISGKLPDTVNMLLSPHVLNQKMIFEAAIKKDKELVFHAFLNDPFVRKLTYSDAKKLFNEMFDNAREYLKGW.

11 to 72 (IKIAYIGGGS…SQWEYKSVDS (62 aa)) provides a ligand contact to NAD(+). Asn-151 is a substrate binding site. Cys-173 serves as a coordination point for Mn(2+). His-174 (proton donor) is an active-site residue. Residue His-209 participates in Mn(2+) binding.

The protein belongs to the glycosyl hydrolase 4 family. As to quaternary structure, homotetramer. NAD(+) serves as cofactor. The cofactor is Mn(2+).

It catalyses the reaction [(1-&gt;4)-alpha-D-galacturonosyl](n) + H2O = alpha-D-galacturonate + [(1-&gt;4)-alpha-D-galacturonosyl](n-1). In terms of biological role, alpha-galacturonidase able to catalyze the hydrolysis of the chromogenic substrate p-nitrophenyl-alpha-D-galacturonic acid (pNPalphaGalUA). It is probable that alpha-1,4-di-galacturonate (GalUA(2)) is the naturally occurring substrate. The polypeptide is Alpha-galacturonidase (Thermoanaerobacter italicus (strain DSM 9252 / Ab9)).